The sequence spans 184 residues: Photosystem I assembly protein Ycf4 (184 aa).

Transmembrane regions (helical) follow at residues 22–42 and 64–84; these read FCWA…GISS and IVMS…WSTI.

Belongs to the Ycf4 family.

The protein resides in the plastid. It is found in the chloroplast thylakoid membrane. Seems to be required for the assembly of the photosystem I complex. In Piper cenocladum (Ant piper), this protein is Photosystem I assembly protein Ycf4.